The primary structure comprises 286 residues: Phosphoribosylaminoimidazole-succinocarboxamide synthase (286 aa).

This sequence belongs to the SAICAR synthetase family.

It catalyses the reaction 5-amino-1-(5-phospho-D-ribosyl)imidazole-4-carboxylate + L-aspartate + ATP = (2S)-2-[5-amino-1-(5-phospho-beta-D-ribosyl)imidazole-4-carboxamido]succinate + ADP + phosphate + 2 H(+). It functions in the pathway purine metabolism; IMP biosynthesis via de novo pathway; 5-amino-1-(5-phospho-D-ribosyl)imidazole-4-carboxamide from 5-amino-1-(5-phospho-D-ribosyl)imidazole-4-carboxylate: step 1/2. The polypeptide is Phosphoribosylaminoimidazole-succinocarboxamide synthase (purC) (Pasteurella multocida (strain Pm70)).